We begin with the raw amino-acid sequence, 356 residues long: Trans-enoyl reductase pgmF (356 aa).

NADP(+) contacts are provided by residues 57 to 60 (VDFK), 175 to 178 (SGGC), 198 to 201 (STPN), tyrosine 216, 261 to 262 (VG), and 342 to 343 (AK).

Belongs to the zinc-containing alcohol dehydrogenase family.

In terms of biological role, FAD-linked oxidoreductase; part of the gene cluster that mediates the biosynthesis of pleosporalin A, ascomycone A, as well as a third cryptic naphthoquinone derived pigment, all responsible for the coloration of conidia. The pathway begins with the biosynthesis of the cyclized heptaketide 3-acetonyl-1,6,8-trihydroxy-2-naphthaldehyde by the NR-PKS pgmA. The C-6 hydroxyl group is further methylated by the O-methyltransferase pgmB to yield fusarubinaldehyde which is in turn oxidized by the cytochrome P450 monooxygenase pgmC at C-9. The C-1 hydroxyl group is then methylated spontaneously. Although pgmE, pgmD and pgmH are essential for the production of pleosporalin A, it is not the case for the 2 other final products and it remains difficult to assign a specific function to each enzyme. PgmF and pgmG seem not to be involved in pigment biosynthesis although they were regulated by the cluster-specific transcription factor pgmR. The polypeptide is Trans-enoyl reductase pgmF (Aspergillus terreus).